A 634-amino-acid chain; its full sequence is Threonine--tRNA ligase (634 aa).

The 61-residue stretch at 1-61 (MINIRFPDGS…NSNCELRLIT (61 aa)) folds into the TGS domain. Positions 241–532 (DHRKIGKVLD…LIEHYAGNLP (292 aa)) are catalytic. Zn(2+) contacts are provided by Cys332, His383, and His509.

The protein belongs to the class-II aminoacyl-tRNA synthetase family. As to quaternary structure, homodimer. Requires Zn(2+) as cofactor.

It is found in the cytoplasm. The enzyme catalyses tRNA(Thr) + L-threonine + ATP = L-threonyl-tRNA(Thr) + AMP + diphosphate + H(+). Its function is as follows. Catalyzes the attachment of threonine to tRNA(Thr) in a two-step reaction: L-threonine is first activated by ATP to form Thr-AMP and then transferred to the acceptor end of tRNA(Thr). Also edits incorrectly charged L-seryl-tRNA(Thr). In Francisella tularensis subsp. novicida (strain U112), this protein is Threonine--tRNA ligase.